The sequence spans 238 residues: Large ribosomal subunit protein uL1 (238 aa).

Belongs to the universal ribosomal protein uL1 family. In terms of assembly, part of the 50S ribosomal subunit.

Functionally, binds directly to 23S rRNA. The L1 stalk is quite mobile in the ribosome, and is involved in E site tRNA release. Protein L1 is also a translational repressor protein, it controls the translation of the L11 operon by binding to its mRNA. In Salinispora tropica (strain ATCC BAA-916 / DSM 44818 / JCM 13857 / NBRC 105044 / CNB-440), this protein is Large ribosomal subunit protein uL1.